The chain runs to 223 residues: Phosphoribosylformylglycinamidine synthase subunit PurQ (223 aa).

One can recognise a Glutamine amidotransferase type-1 domain in the interval 3 to 223 (SAVVQLPGLN…FASALDVIAA (221 aa)). C86 serves as the catalytic Nucleophile. Residues H196 and E198 contribute to the active site.

In terms of assembly, part of the FGAM synthase complex composed of 1 PurL, 1 PurQ and 2 PurS subunits.

The protein resides in the cytoplasm. The catalysed reaction is N(2)-formyl-N(1)-(5-phospho-beta-D-ribosyl)glycinamide + L-glutamine + ATP + H2O = 2-formamido-N(1)-(5-O-phospho-beta-D-ribosyl)acetamidine + L-glutamate + ADP + phosphate + H(+). The enzyme catalyses L-glutamine + H2O = L-glutamate + NH4(+). Its pathway is purine metabolism; IMP biosynthesis via de novo pathway; 5-amino-1-(5-phospho-D-ribosyl)imidazole from N(2)-formyl-N(1)-(5-phospho-D-ribosyl)glycinamide: step 1/2. In terms of biological role, part of the phosphoribosylformylglycinamidine synthase complex involved in the purines biosynthetic pathway. Catalyzes the ATP-dependent conversion of formylglycinamide ribonucleotide (FGAR) and glutamine to yield formylglycinamidine ribonucleotide (FGAM) and glutamate. The FGAM synthase complex is composed of three subunits. PurQ produces an ammonia molecule by converting glutamine to glutamate. PurL transfers the ammonia molecule to FGAR to form FGAM in an ATP-dependent manner. PurS interacts with PurQ and PurL and is thought to assist in the transfer of the ammonia molecule from PurQ to PurL. In Rhizobium meliloti (strain 1021) (Ensifer meliloti), this protein is Phosphoribosylformylglycinamidine synthase subunit PurQ.